The chain runs to 292 residues: Phosphatidylglycerol--prolipoprotein diacylglyceryl transferase (292 aa).

4 consecutive transmembrane segments (helical) span residues 7–27, 45–65, 83–103, and 116–136; these read IILS…FLRE, FQLR…YVLA, LFWG…IFNW, and IWHG…MIFI. Arginine 165 is an a 1,2-diacyl-sn-glycero-3-phospho-(1'-sn-glycerol) binding site. The next 2 membrane-spanning stretches (helical) occupy residues 204–224 and 264–284; these read PTFL…YFFV and AAQV…AYII.

This sequence belongs to the Lgt family.

The protein resides in the cell inner membrane. The enzyme catalyses L-cysteinyl-[prolipoprotein] + a 1,2-diacyl-sn-glycero-3-phospho-(1'-sn-glycerol) = an S-1,2-diacyl-sn-glyceryl-L-cysteinyl-[prolipoprotein] + sn-glycerol 1-phosphate + H(+). Its pathway is protein modification; lipoprotein biosynthesis (diacylglyceryl transfer). Catalyzes the transfer of the diacylglyceryl group from phosphatidylglycerol to the sulfhydryl group of the N-terminal cysteine of a prolipoprotein, the first step in the formation of mature lipoproteins. The chain is Phosphatidylglycerol--prolipoprotein diacylglyceryl transferase from Fervidobacterium nodosum (strain ATCC 35602 / DSM 5306 / Rt17-B1).